Consider the following 104-residue polypeptide: MSENWIDAAARDEVPRGRRDRHQYRRQGDCLYEVAGEIYATDNTCTHGAARMSDGFLEGREIECPLHQGRFDVCTGKALCTPLTQDIKTYPVKIENMRVMLKLD.

Residues 1 to 21 form a disordered region; that stretch reads MSENWIDAAARDEVPRGRRDR. One can recognise a Rieske domain in the interval 5-101; it reads WIDAAARDEV…VKIENMRVML (97 aa). Residues Cys45, His47, Cys64, and His67 each coordinate [2Fe-2S] cluster.

It belongs to the bacterial ring-hydroxylating dioxygenase ferredoxin component family. As to quaternary structure, the 2,4-dinitrotoluene dioxygenase (DNTDO) multicomponent enzyme system is composed of an electron transfer component and a dioxygenase component (iron sulfur protein (ISP)). The electron transfer component is composed of a ferredoxin reductase (DntAa) and a ferredoxin (DntAb), and the dioxygenase component is formed of a large alpha subunit (DntAc) and a small beta subunit (DntAd). It depends on [2Fe-2S] cluster as a cofactor.

Component of the 2,4-dinitrotoluene dioxygenase (DNTDO) multicomponent enzyme system which catalyzes the incorporation of both atoms of molecular oxygen into 2,4-dinitrotoluene (DNT) to form 4-methyl-5-nitrocatechol (MNC) and nitrite. Functions as an intermediate electron transfer protein via a specific interaction with iron sulfur protein components (ISP)(DntAc and DntAd). Also able to convert naphthalene to cis-(1R,2S)-dihydroxy-1,2-dihydronaphthalene. The protein is 2,4-dinitrotoluene dioxygenase system, ferredoxin component of Burkholderia sp. (strain RASC).